Consider the following 284-residue polypeptide: Formamidopyrimidine-DNA glycosylase (284 aa).

P2 functions as the Schiff-base intermediate with DNA in the catalytic mechanism. E3 (proton donor) is an active-site residue. Catalysis depends on K58, which acts as the Proton donor; for beta-elimination activity. DNA-binding residues include H97, R120, and R165. The FPG-type zinc finger occupies 250–284 (FVYDRAGEPCKVCGTPVRQIVQGQRSTFYCTHCQH). R274 acts as the Proton donor; for delta-elimination activity in catalysis.

It belongs to the FPG family. In terms of assembly, monomer. Requires Zn(2+) as cofactor.

It carries out the reaction Hydrolysis of DNA containing ring-opened 7-methylguanine residues, releasing 2,6-diamino-4-hydroxy-5-(N-methyl)formamidopyrimidine.. The enzyme catalyses 2'-deoxyribonucleotide-(2'-deoxyribose 5'-phosphate)-2'-deoxyribonucleotide-DNA = a 3'-end 2'-deoxyribonucleotide-(2,3-dehydro-2,3-deoxyribose 5'-phosphate)-DNA + a 5'-end 5'-phospho-2'-deoxyribonucleoside-DNA + H(+). In terms of biological role, involved in base excision repair of DNA damaged by oxidation or by mutagenic agents. Acts as a DNA glycosylase that recognizes and removes damaged bases. Has a preference for oxidized purines, such as 7,8-dihydro-8-oxoguanine (8-oxoG). Has AP (apurinic/apyrimidinic) lyase activity and introduces nicks in the DNA strand. Cleaves the DNA backbone by beta-delta elimination to generate a single-strand break at the site of the removed base with both 3'- and 5'-phosphates. In Cupriavidus pinatubonensis (strain JMP 134 / LMG 1197) (Cupriavidus necator (strain JMP 134)), this protein is Formamidopyrimidine-DNA glycosylase.